The sequence spans 36 residues: Peroxiredoxin-4 (36 aa).

This sequence belongs to the peroxiredoxin family. AhpC/Prx1 subfamily. As to quaternary structure, homodimer; disulfide-linked, upon oxidation. As to expression, venom gland.

It localises to the secreted. The enzyme catalyses a hydroperoxide + [thioredoxin]-dithiol = an alcohol + [thioredoxin]-disulfide + H2O. Venom peroxiredoxin enzyme that may play a role as part of a redox pathway leading to the structural/functional diversification of toxins through a disulfide bond engineering mechanism. The protein is Peroxiredoxin-4 of Crotalus atrox (Western diamondback rattlesnake).